A 227-amino-acid chain; its full sequence is DNA repair protein RecO (227 aa).

This sequence belongs to the RecO family.

Its function is as follows. Involved in DNA repair and RecF pathway recombination. The sequence is that of DNA repair protein RecO from Pseudomonas putida (strain ATCC 700007 / DSM 6899 / JCM 31910 / BCRC 17059 / LMG 24140 / F1).